The sequence spans 101 residues: Large ribosomal subunit protein uL23 (101 aa).

This sequence belongs to the universal ribosomal protein uL23 family. As to quaternary structure, part of the 50S ribosomal subunit. Contacts protein L29, and trigger factor when it is bound to the ribosome.

In terms of biological role, one of the early assembly proteins it binds 23S rRNA. One of the proteins that surrounds the polypeptide exit tunnel on the outside of the ribosome. Forms the main docking site for trigger factor binding to the ribosome. This is Large ribosomal subunit protein uL23 from Haemophilus ducreyi (strain 35000HP / ATCC 700724).